The primary structure comprises 105 residues: Large ribosomal subunit protein bL21 (105 aa).

Belongs to the bacterial ribosomal protein bL21 family. In terms of assembly, part of the 50S ribosomal subunit. Contacts protein L20.

Its function is as follows. This protein binds to 23S rRNA in the presence of protein L20. The polypeptide is Large ribosomal subunit protein bL21 (Rhizobium johnstonii (strain DSM 114642 / LMG 32736 / 3841) (Rhizobium leguminosarum bv. viciae)).